A 1938-amino-acid chain; its full sequence is Myosin-6 (1938 aa).

Residues 32 to 81 (DIRTECFVPDDKEEYVKAKVVSREGGKVTAETENGKTVTIKEDQVMQQNP) enclose the Myosin N-terminal SH3-like domain. The region spanning 85–780 (DKIEDMAMLT…LLGLLEEMRD (696 aa)) is the Myosin motor domain. An N6,N6,N6-trimethyllysine modification is found at Lys129. 178–185 (GESGAGKT) contacts ATP. At Thr379 the chain carries Phosphothreonine. Residue Ser417 is modified to Phosphoserine. 2 actin-binding regions span residues 657–679 (LNKLMTNLKTTHPHFVRCIIPNE) and 759–773 (KFGHTKVFFKAGLLG). The 30-residue stretch at 783–812 (LSRIITRIQAQARGQLMRIEFKKIVERRDA) folds into the IQ domain. 2 calmodulin-binding regions span residues 790–807 (IQAQARGQLMRIEFKKIV) and 816–833 (IQWNIRAFMGVKNWPWMK). The stretch at 842-1938 (LKSAETEKEM…IGAKKMHDEE (1097 aa)) forms a coiled coil. Phosphoserine occurs at positions 1090 and 1139. At Tyr1261 the chain carries Phosphotyrosine. The residue at position 1271 (Ser1271) is a Phosphoserine. A phosphothreonine mark is found at Thr1277 and Thr1284. Phosphoserine is present on Ser1309. Position 1310 is a phosphotyrosine (Tyr1310). Thr1311 carries the post-translational modification Phosphothreonine. Ser1512 is subject to Phosphoserine. Thr1515 is modified (phosphothreonine). The disordered stretch occupies residues 1909–1938 (EERADIAESQVNKLRAKSRDIGAKKMHDEE). A compositionally biased stretch (basic and acidic residues) spans 1925 to 1938 (KSRDIGAKKMHDEE).

Belongs to the TRAFAC class myosin-kinesin ATPase superfamily. Myosin family. In terms of assembly, muscle myosin is a hexameric protein that consists of 2 heavy chain subunits (MHC), 2 alkali light chain subunits (MLC) and 2 regulatory light chain subunits (MLC-2).

The protein localises to the cytoplasm. Its subcellular location is the myofibril. Muscle contraction. This chain is Myosin-6 (Myh6), found in Mus musculus (Mouse).